The chain runs to 220 residues: Large ribosomal subunit protein uL3 (220 aa).

The segment at 126-158 is disordered; sequence GFQGAIKRHGQSRGPMSHGSRYHRRPGSMGMAS.

The protein belongs to the universal ribosomal protein uL3 family. Part of the 50S ribosomal subunit. Forms a cluster with proteins L14 and L19.

Its function is as follows. One of the primary rRNA binding proteins, it binds directly near the 3'-end of the 23S rRNA, where it nucleates assembly of the 50S subunit. In Macrococcus caseolyticus (strain JCSC5402) (Macrococcoides caseolyticum), this protein is Large ribosomal subunit protein uL3.